Reading from the N-terminus, the 576-residue chain is Ferroportin (576 aa).

Residues 1–23 (MPKAGEQARQGGCCGSLANYLTS) lie on the Cytoplasmic side of the membrane. Residues 24 to 53 (AKFLLYLGHSLSTWGDRMWHFAVSVFLVEL) form a helical membrane-spanning segment. Fe cation contacts are provided by Asp39 and His43. Residues 54–57 (YGNS) lie on the Extracellular side of the membrane. A helical membrane pass occupies residues 58-84 (LLLTAVYGLVVAGSVLVLGAIIGDWVD). Residues 85-87 (KNA) are Cytoplasmic-facing. A helical transmembrane segment spans residues 88 to 118 (RLKVAQTSLVVQNVSVILCGIILMMVFLHKN). Residues 119–126 (ELLTMYHG) lie on the Extracellular side of the membrane. The helical transmembrane segment at 127-162 (WVLTFCYILIITIADVANLASTATAITIQRDWIVVV) threads the bilayer. Over 163-164 (AG) the chain is Cytoplasmic. A helical transmembrane segment spans residues 165-195 (GDRSKLADMNATIRRIDQLTNILAPMAVGQI). The Extracellular segment spans residues 196–202 (MTFGSAV). The helical transmembrane segment at 203–229 (IGCGFISGWNLVSMCVEYFLLWKVYQK) threads the bilayer. The Cytoplasmic segment spans residues 230–306 (TPALAVKAAL…DGWVSYYNQS (77 aa)). Residues 307–333 (VFLAGMGLAFLYMTVLGFDCITTGYAY) traverse the membrane as a helical segment. Cys326 is a Fe cation binding site. The Extracellular segment spans residues 334–338 (TQGLS). A helical membrane pass occupies residues 339–366 (GSILSILMGASAITGIMGTVAFTWLRRK). Over 367 to 368 (CG) the chain is Cytoplasmic. The chain crosses the membrane as a helical span at residues 369–391 (LVRTGLISGFAQLSCLILCVISV). The Extracellular portion of the chain corresponds to 392 to 458 (FMPGSPLDLS…ETTPKSVPII (67 aa)). N-linked (GlcNAc...) asparagine glycosylation occurs at Asn439. A helical transmembrane segment spans residues 459–488 (SVSLLFAGVIAARIGLWSFDLTVTQLLQEN). Residues 489–493 (VIESE) lie on the Cytoplasmic side of the membrane. The chain crosses the membrane as a helical span at residues 494 to 518 (RGIINGVQNSMNYLLDLLHFIMVIL). A Fe cation-binding site is contributed by His512. Residues 519–521 (APN) lie on the Extracellular side of the membrane. A helical membrane pass occupies residues 522–547 (PEAFGLLVLISVSFVAMGHIMYFRFA). Residues 548 to 576 (QKTLGSKLFACGADDEEVTNENQANTSVV) are Cytoplasmic-facing.

It belongs to the ferroportin (FP) (TC 2.A.100) family. SLC40A subfamily. As to quaternary structure, identified in a complex with STOM. Interacts with HAMP; affinity of the peptide hormone HAMP for SLC40A1 increases by 80-fold in the presence of iron and the interaction promotes SLC40A1 ubiquitination and degradation. Part of a complex composed of SLC40A1/ferroportin, TF/transferrin and HEPH/hephaestin that transfers iron from cells to transferrin. Post-translationally, polyubiquitinated by RNF217; leading to proteasomal degradation. Under conditions of high systemic iron levels, both the hormone peptide hepcidin/HAMP and holo(iron bound)-transferrin/TF induce the ubiquitination, internalization and proteasomal degradation of SLC40A1 to control iron release from cells.

It is found in the cell membrane. The protein localises to the basolateral cell membrane. It carries out the reaction Fe(2+)(in) = Fe(2+)(out). During elevated serum iron levels, liver-derived hepcidin/HAMP negatively regulates cell surface ferroportin/SLC40A1 by inducing its ubiquitination, internalization, and degradation. Indeed, hepcidin/HAMP affinity towards ferroportin/SLC40A1 increases by 80-fold in the presence of iron. Transports Fe(2+) from the inside of a cell to the outside of the cell, playing a key role for maintaining systemic iron homeostasis. Transports iron from intestinal, splenic, hepatic cells, macrophages and erythrocytes into the blood to provide iron to other tissues. Controls therefore dietary iron uptake, iron recycling by macrophages and erythrocytes, and release of iron stores in hepatocytes. When iron is in excess in serum, circulating HAMP/hepcidin levels increase resulting in a degradation of SLC40A1, thus limiting the iron efflux to plasma. The protein is Ferroportin of Canis lupus familiaris (Dog).